Reading from the N-terminus, the 232-residue chain is Large ribosomal subunit protein uL1 (232 aa).

The protein belongs to the universal ribosomal protein uL1 family. Part of the 50S ribosomal subunit.

Functionally, binds directly to 23S rRNA. The L1 stalk is quite mobile in the ribosome, and is involved in E site tRNA release. Its function is as follows. Protein L1 is also a translational repressor protein, it controls the translation of the L11 operon by binding to its mRNA. The sequence is that of Large ribosomal subunit protein uL1 from Clostridium novyi (strain NT).